The chain runs to 272 residues: 3-methyl-2-oxobutanoate hydroxymethyltransferase (272 aa).

The Mg(2+) site is built by Asp-52 and Asp-91. 3-methyl-2-oxobutanoate is bound by residues 52-53 (DS), Asp-91, and Lys-121. Residue Glu-123 participates in Mg(2+) binding. The Proton acceptor role is filled by Glu-190.

It belongs to the PanB family. As to quaternary structure, homodecamer; pentamer of dimers. Mg(2+) serves as cofactor.

It localises to the cytoplasm. The enzyme catalyses 3-methyl-2-oxobutanoate + (6R)-5,10-methylene-5,6,7,8-tetrahydrofolate + H2O = 2-dehydropantoate + (6S)-5,6,7,8-tetrahydrofolate. Its pathway is cofactor biosynthesis; (R)-pantothenate biosynthesis; (R)-pantoate from 3-methyl-2-oxobutanoate: step 1/2. In terms of biological role, catalyzes the reversible reaction in which hydroxymethyl group from 5,10-methylenetetrahydrofolate is transferred onto alpha-ketoisovalerate to form ketopantoate. The polypeptide is 3-methyl-2-oxobutanoate hydroxymethyltransferase (Cytophaga hutchinsonii (strain ATCC 33406 / DSM 1761 / CIP 103989 / NBRC 15051 / NCIMB 9469 / D465)).